The following is an 874-amino-acid chain: Probable cation-transporting P-type ATPase (874 aa).

Topologically, residues 1–41 (MNSWTGLSEQAAIKSRQEHGANFLPEKKATPFWLLFLQQFK) are cytoplasmic. A helical membrane pass occupies residues 42-62 (SLVVILLLLASLLSFVVAIVS). Over 63–79 (GLRSNWNFNHDLIIEWV) the chain is Extracellular. The helical transmembrane segment at 80-100 (QPFIILLTVFANSLIGSIQEF) threads the bilayer. Residues 101–237 (KAQKSASALK…TKLSPLQQKL (137 aa)) are Cytoplasmic-facing. Residues 238 to 257 (EKIGKWFSWFGLGLFAVVFL) traverse the membrane as a helical segment. The Extracellular segment spans residues 258–275 (VQTALLGFDNFTNNWSIA). A helical transmembrane segment spans residues 276–293 (LIGAIALVVAIIPEGLVT). Over 294–644 (FINVIFALSV…EEGRKTFLTC (351 aa)) the chain is Cytoplasmic. D331 (4-aspartylphosphate intermediate) is an active-site residue. Positions 589 and 593 each coordinate Mg(2+). Residues 645–664 (KRVLLNLFLTSIAGTVVVLL) form a helical membrane-spanning segment. Topologically, residues 665–687 (GLFILGQVFKTNLLQQGHDFQVF) are extracellular. The chain crosses the membrane as a helical span at residues 688–708 (SPTQLLIINLFVHGFPAVALA). The Cytoplasmic portion of the chain corresponds to 709 to 726 (VQPVKEKLMVGSFSTKNL). The chain crosses the membrane as a helical span at residues 727 to 749 (FYNRQGFDLIWQSLFLSFLTLLF). Residues 750–770 (YSLGIIYAINNRDLQTSGDLI) lie on the Extracellular side of the membrane. A helical transmembrane segment spans residues 771-790 (NRAGSTCGFFILGASAALNS). Residues 791 to 803 (LNLMVDKPLLMTN) are Cytoplasmic-facing. The chain crosses the membrane as a helical span at residues 804–826 (PWFFKLVWIGSLASILVFLLIIF). Residues 827 to 844 (INPLGLVFNVLQDLTNHP) lie on the Extracellular side of the membrane. A helical membrane pass occupies residues 845-865 (VLISYSFGGVILYMGMNEVVK). Topologically, residues 866 to 874 (LIRLGYGNI) are cytoplasmic.

Belongs to the cation transport ATPase (P-type) (TC 3.A.3) family. Type II subfamily.

The protein localises to the cell membrane. The enzyme catalyses ATP + H2O = ADP + phosphate + H(+). In terms of biological role, could mediate calcium influx. The protein is Probable cation-transporting P-type ATPase (pacL) of Mycoplasma genitalium (strain ATCC 33530 / DSM 19775 / NCTC 10195 / G37) (Mycoplasmoides genitalium).